We begin with the raw amino-acid sequence, 122 residues long: Large ribosomal subunit protein uL14 (122 aa).

Belongs to the universal ribosomal protein uL14 family. Part of the 50S ribosomal subunit. Forms a cluster with proteins L3 and L19. In the 70S ribosome, L14 and L19 interact and together make contacts with the 16S rRNA in bridges B5 and B8.

In terms of biological role, binds to 23S rRNA. Forms part of two intersubunit bridges in the 70S ribosome. This chain is Large ribosomal subunit protein uL14, found in Helicobacter acinonychis (strain Sheeba).